The following is a 210-amino-acid chain: Probable GTP-binding protein EngB (210 aa).

In terms of domain architecture, EngB-type G spans threonine 25 to glutamate 199. Residues glycine 33–serine 40, glycine 60–leucine 64, aspartate 78–glycine 81, threonine 145–aspartate 148, and phenylalanine 178–serine 180 contribute to the GTP site. Serine 40 and threonine 62 together coordinate Mg(2+).

The protein belongs to the TRAFAC class TrmE-Era-EngA-EngB-Septin-like GTPase superfamily. EngB GTPase family. Requires Mg(2+) as cofactor.

Functionally, necessary for normal cell division and for the maintenance of normal septation. The chain is Probable GTP-binding protein EngB from Escherichia coli O157:H7.